Here is a 553-residue protein sequence, read N- to C-terminus: Phosphoglucomutase (553 aa).

The disordered stretch occupies residues 1-25; sequence MQATIKRYPTSPISGQTLGTSGLRK. Residues 11–20 are compositionally biased toward polar residues; it reads SPISGQTLGT. Substrate-binding positions include threonine 20, arginine 24, 117–118, and lysine 131; that span reads SH. Serine 117 acts as the Phosphoserine intermediate in catalysis. Serine 117 is a binding site for Mg(2+). Aspartate 289, aspartate 291, and aspartate 293 together coordinate Mg(2+). Substrate contacts are provided by residues 293–294, threonine 352, 371–373, lysine 384, and arginine 509; these read DR and EES.

It belongs to the phosphohexose mutase family. The cofactor is Mg(2+).

The protein localises to the cytoplasm. It catalyses the reaction alpha-D-glucose 1-phosphate = alpha-D-glucose 6-phosphate. Its function is as follows. Catalyzes the reversible conversion of glucose 1-phosphate into glucose 6-phosphate. This enzyme participates in both the breakdown and synthesis of glucose. In Entamoeba histolytica (strain ATCC 30459 / HM-1:IMSS / ABRM), this protein is Phosphoglucomutase.